We begin with the raw amino-acid sequence, 195 residues long: MATGPTYRVKFRRRREAKTDYRKRLKLLLSRKPRLVARRTLNHCIAQIVLYDEKGDKTVVSAHSRELIKLGYKGHTGNLPSAYLTGYLLGKKALAKGYTEAVLDIGLHRATKGNAIFAILKGALDAGMEIPHGEEILPSEERIRGEHIKAYAEMLKEQDEERYKKQFSKYLEKGLEPEKLPEHFEEIKAKIDSMF.

This sequence belongs to the universal ribosomal protein uL18 family. As to quaternary structure, part of the 50S ribosomal subunit. Contacts the 5S and 23S rRNAs.

Functionally, this is one of the proteins that bind and probably mediate the attachment of the 5S RNA into the large ribosomal subunit, where it forms part of the central protuberance. The chain is Large ribosomal subunit protein uL18 from Methanocaldococcus jannaschii (strain ATCC 43067 / DSM 2661 / JAL-1 / JCM 10045 / NBRC 100440) (Methanococcus jannaschii).